A 335-amino-acid chain; its full sequence is Methyltransferase pgmE (335 aa).

This sequence belongs to the methyltransferase superfamily.

It functions in the pathway pigment biosynthesis. Its pathway is secondary metabolite biosynthesis. Functionally, methyltransferase; part of the gene cluster that mediates the biosynthesis of pleosporalin A, ascomycone A, as well as a third cryptic naphthoquinone derived pigment, all responsible for the coloration of conidia. Essential for the production of pleosporalin A, but not the 2 other final products. The pathway begins with the biosynthesis of the cyclized heptaketide 3-acetonyl-1,6,8-trihydroxy-2-naphthaldehyde by the NR-PKS pgmA. The C-6 hydroxyl group is further methylated by the O-methyltransferase pgmB to yield fusarubinaldehyde which is in turn oxidized by the cytochrome P450 monooxygenase pgmC at C-9. The C-1 hydroxyl group is then methylated spontaneously. Although pgmE, pgmD and pgmH are essential for the production of pleosporalin A, it is not the case for the 2 other final products and it remains difficult to assign a specific function to each enzyme. PgmF and pgmG seem not to be involved in pigment biosynthesis although they were regulated by the cluster-specific transcription factor pgmR. The polypeptide is Methyltransferase pgmE (Aspergillus terreus (strain NIH 2624 / FGSC A1156)).